Reading from the N-terminus, the 1129-residue chain is Ubiquitin carboxyl-terminal hydrolase 15 (1129 aa).

The segment at 1 to 26 is disordered; that stretch reads MVLSNVDAEEVNMDSSMELEESSQEP. Residues 7 to 23 are compositionally biased toward acidic residues; the sequence is DAEEVNMDSSMELEESS. Residues 51-204 enclose the MATH domain; it reads HASYSWVVKN…NDEICISVTV (154 aa). The USP domain occupies 230–545; it reads VGLKNQGATC…NAYMLVYFRK (316 aa). Residue Cys-239 is the Nucleophile of the active site. Catalysis depends on His-481, which acts as the Proton acceptor.

This sequence belongs to the peptidase C19 family.

The protein resides in the nucleus. It carries out the reaction Thiol-dependent hydrolysis of ester, thioester, amide, peptide and isopeptide bonds formed by the C-terminal Gly of ubiquitin (a 76-residue protein attached to proteins as an intracellular targeting signal).. Hydrolase that deubiquitinates target proteins. Cleaves the UBL propeptide in sde2. Involved in regulating the steady-state levels of proteins including prp4. In Schizosaccharomyces pombe (strain 972 / ATCC 24843) (Fission yeast), this protein is Ubiquitin carboxyl-terminal hydrolase 15.